The following is a 541-amino-acid chain: Ankyrin repeat domain-containing protein 13C (541 aa).

The span at 1 to 20 (MTGEKIRSLRRDHKPSKEDG) shows a compositional bias: basic and acidic residues. Residues 1–53 (MTGEKIRSLRRDHKPSKEDGDVLEPCEEEATAALGGAFTGGRSGPGGSGKGGK) form a disordered region. The span at 21–30 (DVLEPCEEEA) shows a compositional bias: acidic residues. The span at 37–52 (AFTGGRSGPGGSGKGG) shows a compositional bias: gly residues. ANK repeat units lie at residues 111 to 142 (PSLYPVHECVFKGDVRRLSSLIRTHNIGQKDN), 143 to 172 (HGNTPLHLAVMLGNKECAHLLLAHNAPVKV), and 176 to 205 (QGWSPLAEAISYGDRQMITALLRKLKQQSR). Ser411 carries the post-translational modification Phosphoserine.

It is found in the endoplasmic reticulum membrane. In terms of biological role, acts as a molecular chaperone for G protein-coupled receptors, regulating their biogenesis and exit from the ER. This chain is Ankyrin repeat domain-containing protein 13C (Ankrd13c), found in Mus musculus (Mouse).